Here is a 573-residue protein sequence, read N- to C-terminus: MTDRLASLFESAVSMLPMSEARSLDLFTEITNYDESACDAWIGRIRCGDTDRVTLFRAWYSRRNFGQLSGSVQISMSTLNARIAIGGLYGDITYPVTSPLAITMGFAACEAAQGNYADAMEALEAAPVAGSEHLVAWMKAVVYGAAERWTDVIDQVKSAGKWPDKFLAGAAGVAHGVAAANLALFTEAERRLTEANDSPAGEACARAIAWYLAMARRSQGNESAAVALLEWLQTTHPEPKVAAALKDPSYRLKTTTAEQIASRADPWDPGSVVTDNSGRERLLAEAQAELDRQIGLTRVKNQIERYRAATLMARVRAAKGMKVAQPSKHMIFTGPPGTGKTTIARVVANILAGLGVIAEPKLVETSRKDFVAEYEGQSAVKTAKTIDQALGGVLFIDEAYALVQERDGRTDPFGQEALDTLLARMENDRDRLVVIIAGYSSDIDRLLETNEGLRSRFATRIEFDTYSPEELLEIANVIAAADDSALTAEAAENFLQAAKQLEQRMLRGRRALDVAGNGRYARQLVEASEQCRDMRLAQVLDIDTLDEDRLREINGSDMAEAIAAVHAHLNMRE.

334 to 341 (GPPGTGKT) provides a ligand contact to ATP.

Belongs to the CbxX/CfxQ family. In terms of assembly, part of the ESX-1 / type VII secretion system (T7SS), which is composed of cytosolic and membrane components.

The protein localises to the cytoplasm. Part of the ESX-1 specialized secretion system, which delivers several virulence factors to host cells during infection, including the key virulence factors EsxA (ESAT-6) and EsxB (CFP-10). EccA1 exhibits ATPase activity and may provide energy for the export of ESX-1 substrates. The protein is ESX-1 secretion system protein EccA1 of Mycobacterium tuberculosis (strain CDC 1551 / Oshkosh).